Consider the following 274-residue polypeptide: 4-diphosphocytidyl-2-C-methyl-D-erythritol kinase (274 aa).

Lys-8 is an active-site residue. 94–104 provides a ligand contact to ATP; sequence PSGAGLGGGSS. The active site involves Asp-136.

The protein belongs to the GHMP kinase family. IspE subfamily.

The enzyme catalyses 4-CDP-2-C-methyl-D-erythritol + ATP = 4-CDP-2-C-methyl-D-erythritol 2-phosphate + ADP + H(+). Its pathway is isoprenoid biosynthesis; isopentenyl diphosphate biosynthesis via DXP pathway; isopentenyl diphosphate from 1-deoxy-D-xylulose 5-phosphate: step 3/6. In terms of biological role, catalyzes the phosphorylation of the position 2 hydroxy group of 4-diphosphocytidyl-2C-methyl-D-erythritol. The chain is 4-diphosphocytidyl-2-C-methyl-D-erythritol kinase from Bacteroides thetaiotaomicron (strain ATCC 29148 / DSM 2079 / JCM 5827 / CCUG 10774 / NCTC 10582 / VPI-5482 / E50).